Consider the following 26-residue polypeptide: Superoxide dismutase [Cu-Zn] (26 aa).

Residue C7 is the site of S-palmitoyl cysteine attachment.

Belongs to the Cu-Zn superoxide dismutase family. Homotrimer. It depends on Cu cation as a cofactor. Zn(2+) serves as cofactor.

The protein localises to the cytoplasm. It is found in the nucleus. It catalyses the reaction 2 superoxide + 2 H(+) = H2O2 + O2. Its function is as follows. Destroys radicals which are normally produced within the cells and which are toxic to biological systems. The chain is Superoxide dismutase [Cu-Zn] (sod1) from Paralichthys olivaceus (Bastard halibut).